The chain runs to 323 residues: Deaminated glutathione amidase (323 aa).

The N-terminal 33 residues, 1-33 (MLGFITRPPHQLLCTGYRLLRTPVLCTQPRPRT), are a transit peptide targeting the mitochondrion. A CN hydrolase domain is found at 42–294 (LPLVAVCQVT…PGLCLARIDL (253 aa)). Catalysis depends on Glu-82, which acts as the Proton acceptor. The Proton donor role is filled by Lys-157. Residue Cys-199 is the Nucleophile of the active site.

The protein belongs to the carbon-nitrogen hydrolase superfamily. NIT1/NIT2 family. Expressed in most tissues with higher expression in adult liver and kidney as well as in fetal adrenal gland and skeletal muscle.

It is found in the mitochondrion. Its subcellular location is the cytoplasm. The enzyme catalyses N-(4-oxoglutaryl)-L-cysteinylglycine + H2O = L-cysteinylglycine + 2-oxoglutarate. It carries out the reaction N-(4-carboxy-4-oxobutanoyl)-L-ethylglycylglycine + H2O = N-(2-aminobutanoyl)glycine + 2-oxoglutarate. Functionally, catalyzes the hydrolysis of the amide bond in N-(4-oxoglutarate)-L-cysteinylglycine (deaminated glutathione), a metabolite repair reaction to dispose of the harmful deaminated glutathione. Possesses amidase activity toward deaminated ophthalmate in vitro. Plays a role in cell growth and apoptosis: loss of expression promotes cell growth, resistance to DNA damage stress and increased incidence to NMBA-induced tumors. Has tumor suppressor properties that enhances the apoptotic responsiveness in cancer cells; this effect is additive to the tumor suppressor activity of FHIT. It is also a negative regulator of primary T-cells. The polypeptide is Deaminated glutathione amidase (Mus musculus (Mouse)).